The sequence spans 267 residues: 7alpha-hydroxysteroid dehydrogenase (267 aa).

NADP(+) is bound by residues 13–18 (SATRGI), Arg38, 63–64 (DA), and Asn90. Cholate-binding residues include Ser145 and Tyr158. Residues Tyr158, Lys162, and 191–195 (IATDA) each bind NADP(+). The active-site Proton acceptor is Tyr158.

This sequence belongs to the short-chain dehydrogenases/reductases (SDR) family. Homotetramer.

The catalysed reaction is cholate + NADP(+) = 3alpha,12alpha-dihydroxy-7-oxo-5beta-cholanate + NADPH + H(+). The enzyme catalyses chenodeoxycholate + NADP(+) = 7-oxolithocholate + NADPH + H(+). 7alpha-hydroxysteroid dehydrogenase that catalyzes the NADP(+)-dependent oxidation of the 7alpha-hydroxy group of 7alpha-hydroxysteroids, such as the major human bile acids cholate and chenodeoxycholate, to the corresponding 7-oxosteroids. Is thus liley involved in the metabolism of primary bile acids. This is 7alpha-hydroxysteroid dehydrogenase from Paraclostridium sordellii (Clostridium sordellii).